A 173-amino-acid polypeptide reads, in one-letter code: MDPQAATGRGPGERSSQEAPSAEAGFATADLSGRETETELAVDRLASGAQSIPADIPAHAEGPSSEEEGFAVEKEADGELYAWELSEGPSCPPMEQAADLFNEDWDLELKADQGNPYDADDIQGSISQEIKPWVCCAPQGDMIYDPSWHHPPPLIPHYSKMVFETGQFDDAED.

At M1 the chain carries N-acetylmethionine. The segment at 1–70 (MDPQAATGRG…EGPSSEEEGF (70 aa)) is disordered. A phosphoserine mark is found at S64 and S65.

As to quaternary structure, interacts with PRMT5. Interacts with histone H4; specifically interacts with the N-terminus of histone H4 but not with histone H3. Interacts with CBFB. Found in a complex with PRMT5, RUNX1 and CBFB.

The protein resides in the nucleus. Histone-binding protein required for histone H4 methyltransferase activity of PRMT5. Specifically required for histone H4 'Arg-3' methylation mediated by PRMT5, but not histone H3 'Arg-8' methylation, suggesting that it modulates the substrate specificity of PRMT5. Specifically interacts with the N-terminus of histone H4 but not with histone H3, suggesting that it acts by promoting the association between histone H4 and PRMT5. Involved in CCNE1 promoter repression. Plays a role in muscle cell differentiation by modulating the recruitment of PRMT5 to the promoter of genes involved in the coordination between cell cycle exit and muscle differentiation. This chain is Coordinator of PRMT5 and differentiation stimulator (Coprs), found in Mus musculus (Mouse).